Reading from the N-terminus, the 426-residue chain is Serine--tRNA ligase (426 aa).

L-serine is bound at residue 233–235 (TAE). 264-266 (RSE) contributes to the ATP binding site. Glu-287 contributes to the L-serine binding site. 351 to 354 (EISS) is a binding site for ATP. Ser-387 serves as a coordination point for L-serine.

This sequence belongs to the class-II aminoacyl-tRNA synthetase family. Type-1 seryl-tRNA synthetase subfamily. As to quaternary structure, homodimer. The tRNA molecule binds across the dimer.

The protein resides in the cytoplasm. The enzyme catalyses tRNA(Ser) + L-serine + ATP = L-seryl-tRNA(Ser) + AMP + diphosphate + H(+). It catalyses the reaction tRNA(Sec) + L-serine + ATP = L-seryl-tRNA(Sec) + AMP + diphosphate + H(+). Its pathway is aminoacyl-tRNA biosynthesis; selenocysteinyl-tRNA(Sec) biosynthesis; L-seryl-tRNA(Sec) from L-serine and tRNA(Sec): step 1/1. In terms of biological role, catalyzes the attachment of serine to tRNA(Ser). Is also able to aminoacylate tRNA(Sec) with serine, to form the misacylated tRNA L-seryl-tRNA(Sec), which will be further converted into selenocysteinyl-tRNA(Sec). The sequence is that of Serine--tRNA ligase from Pseudomonas paraeruginosa (strain DSM 24068 / PA7) (Pseudomonas aeruginosa (strain PA7)).